The chain runs to 1265 residues: Methionine synthase (1265 aa).

In terms of domain architecture, Hcy-binding spans 19-338 (QDEIEAILQE…DHIREIAEAV (320 aa)). Residues Cys260, Cys323, and Cys324 each coordinate Zn(2+). The region spanning 371–632 (FVNIGERCNV…IHKELLQLCE (262 aa)) is the Pterin-binding domain. (6S)-5,6,7,8-tetrahydrofolate is bound by residues 382-384 (GSR), Asp449, Asn470, Asp537, Asn579, Arg585, and Arg591. Positions 662–759 (QTDEWRNGPL…FMEKEREETK (98 aa)) constitute a B12-binding N-terminal domain. Residues Glu709, 782-786 (GDVHD), His785, Ser830, Thr834, and Ala886 each bind methylcob(III)alamin. The B12-binding domain occupies 772–907 (QGTIVLATVK…DENLKDEYFE (136 aa)). The 343-residue stretch at 923–1265 (SLKERRYLTL…LGPILGYDTD (343 aa)) folds into the AdoMet activation domain. S-adenosyl-L-methionine is bound by residues Asp974, Arg1172, and 1227–1228 (YF). Position 1264 is a phosphothreonine (Thr1264).

Belongs to the vitamin-B12 dependent methionine synthase family. As to quaternary structure, monomer. Dimer. Forms a multiprotein complex with MMACHC, MMADHC and MTRR. Methylcob(III)alamin is required as a cofactor. Requires Zn(2+) as cofactor.

It localises to the cytoplasm. The enzyme catalyses (6S)-5-methyl-5,6,7,8-tetrahydrofolate + L-homocysteine = (6S)-5,6,7,8-tetrahydrofolate + L-methionine. The protein operates within amino-acid biosynthesis; L-methionine biosynthesis via de novo pathway; L-methionine from L-homocysteine (MetH route): step 1/1. Its function is as follows. Catalyzes the transfer of a methyl group from methylcob(III)alamin (MeCbl) to homocysteine, yielding enzyme-bound cob(I)alamin and methionine in the cytosol. MeCbl is an active form of cobalamin (vitamin B12) used as a cofactor for methionine biosynthesis. Cob(I)alamin form is regenerated to MeCbl by a transfer of a methyl group from 5-methyltetrahydrofolate. The processing of cobalamin in the cytosol occurs in a multiprotein complex composed of at least MMACHC, MMADHC, MTRR (methionine synthase reductase) and MTR which may contribute to shuttle safely and efficiently cobalamin towards MTR in order to produce methionine. The chain is Methionine synthase (MTR) from Bos taurus (Bovine).